Reading from the N-terminus, the 388-residue chain is Diacylglycerol O-acyltransferase 2 (388 aa).

Residues 1 to 69 (MKTLIAAYSG…NRSKVEKQLQ (69 aa)) are Cytoplasmic-facing. The disordered stretch occupies residues 16 to 40 (RQAEADRSQRSHGGPALSREGSGRW). The chain crosses the membrane as a helical span at residues 70-88 (VISVLQWVLSFLVLGVACS). Residues 89-92 (AILM) are Lumenal-facing. A helical transmembrane segment spans residues 93–112 (YIFCTDCWLIAVLYFTWLVF). At 113–388 (DWNTPKKGGR…LPETEVLEVN (276 aa)) the chain is on the cytoplasmic side.

It belongs to the diacylglycerol acyltransferase family. In terms of assembly, forms multimeric complexes consisting of several DGAT2 subunits. Interacts with SLC27A1 and this interaction is enhanced in the presence of ZFYVE1. As to expression, predominantly expressed in liver and white adipose tissue. Expressed at lower level in mammary gland, testis and peripheral blood leukocytes. Expressed in sebaceous glands of normal skin but decreased psoriatic skin.

Its subcellular location is the endoplasmic reticulum membrane. The protein localises to the lipid droplet. It is found in the cytoplasm. The protein resides in the perinuclear region. It catalyses the reaction an acyl-CoA + a 1,2-diacyl-sn-glycerol = a triacyl-sn-glycerol + CoA. It carries out the reaction all-trans-retinol + an acyl-CoA = an all-trans-retinyl ester + CoA. The enzyme catalyses 2-(9Z-octadecenoyl)-glycerol + (9Z)-octadecenoyl-CoA = 1,2-di-(9Z-octadecenoyl)-sn-glycerol + CoA. The catalysed reaction is 1,2-di-(9Z-octadecenoyl)-sn-glycerol + (9Z)-octadecenoyl-CoA = 1,2,3-tri-(9Z-octadecenoyl)-glycerol + CoA. It catalyses the reaction all-trans-retinol + hexadecanoyl-CoA = all-trans-retinyl hexadecanoate + CoA. It carries out the reaction 1-O-(9Z-octadecenyl)-glycerol + (9Z)-octadecenoyl-CoA = 1-O-(9Z-octadecyl)-3-(9Z-octadecenoyl)-glycerol + CoA. The enzyme catalyses 1-(9Z-octadecenoyl)-glycerol + (9Z)-octadecenoyl-CoA = 1,2-di-(9Z-octadecenoyl)-glycerol + CoA. The catalysed reaction is 1,2-di-(9Z-octadecenoyl)-sn-glycerol + hexadecanoyl-CoA = 1,2-di-(9Z)-octadecenoyl-3-hexadecanoyl-sn-glycerol + CoA. It catalyses the reaction 1,3-di-(9Z-octadecenoyl)-glycerol + (9Z)-octadecenoyl-CoA = 1,2,3-tri-(9Z-octadecenoyl)-glycerol + CoA. It carries out the reaction 2,3-di-(9Z)-octadecenoyl-sn-glycerol + (9Z)-octadecenoyl-CoA = 1,2,3-tri-(9Z-octadecenoyl)-glycerol + CoA. The enzyme catalyses 2-(9Z-octadecenoyl)-glycerol + hexadecanoyl-CoA = 1-hexadecanoyl-2-(9Z-octadecenoyl)-sn-glycerol + CoA. Its pathway is glycerolipid metabolism; triacylglycerol biosynthesis. With respect to regulation, inhibited by niacin. Its function is as follows. Essential acyltransferase that catalyzes the terminal and only committed step in triacylglycerol synthesis by using diacylglycerol and fatty acyl CoA as substrates. Required for synthesis and storage of intracellular triglycerides. Probably plays a central role in cytosolic lipid accumulation. In liver, is primarily responsible for incorporating endogenously synthesized fatty acids into triglycerides. Also functions as an acyl-CoA retinol acyltransferase (ARAT). Also able to use 1-monoalkylglycerol (1-MAkG) as an acyl acceptor for the synthesis of monoalkyl-monoacylglycerol (MAMAG). The sequence is that of Diacylglycerol O-acyltransferase 2 from Homo sapiens (Human).